A 582-amino-acid polypeptide reads, in one-letter code: Glutamine--tRNA ligase (582 aa).

Residues 50 to 60 (PEPNGYLHIGH) carry the 'HIGH' region motif. ATP contacts are provided by residues 51–53 (EPN) and 57–63 (HIGHAKS). Residues Asp-83 and Tyr-235 each coordinate L-glutamine. Residues Thr-254 and 289-290 (RL) each bind ATP. Positions 296–300 (ITSKR) match the 'KMSKS' region motif.

It belongs to the class-I aminoacyl-tRNA synthetase family. As to quaternary structure, monomer.

The protein localises to the cytoplasm. It catalyses the reaction tRNA(Gln) + L-glutamine + ATP = L-glutaminyl-tRNA(Gln) + AMP + diphosphate. This is Glutamine--tRNA ligase from Cupriavidus metallidurans (strain ATCC 43123 / DSM 2839 / NBRC 102507 / CH34) (Ralstonia metallidurans).